The chain runs to 172 residues: Myosin regulatory light chain RLC-A (172 aa).

Positions 1–16 are enriched in basic residues; it reads MSSKRAKTKTTKKRPQ. Positions 1–20 are disordered; that stretch reads MSSKRAKTKTTKKRPQRATS. Thr-19 carries the post-translational modification Phosphothreonine; by MLCK. Ser-20 is modified (phosphoserine; by MLCK). EF-hand domains are found at residues 29 to 64, 98 to 133, and 134 to 169; these read SQIQEFKEAFNMIDQNRDGFIDKEDLHDMLASMGKN, DPEDVIRNAFACFDEEAIGTIQEDYLRELLTTMGDR, and FTDEEVDELYREAPIDKKGNFNYIEFTRILKHGAKD. Residues Asp-42, Asn-44, Asp-46, and Asp-53 each coordinate Ca(2+).

Myosin is a hexamer of 2 heavy chains and 4 light chains. Phosphorylation increases the actin-activated myosin ATPase activity and thereby regulates the contractile activity.

Myosin regulatory subunit that plays an important role in regulation of both smooth muscle and nonmuscle cell contractile activity via its phosphorylation. Implicated in cytokinesis, receptor capping, and cell locomotion. The sequence is that of Myosin regulatory light chain RLC-A (Rlc-a) from Rattus norvegicus (Rat).